We begin with the raw amino-acid sequence, 340 residues long: MIVRPVTSADLPALIELARSTGTGLTTLPANEQRLQHRVSWAEKAFRGEAERGDADYLFVLEDDAGKVVGISAIAGAVGLREPWYNYRVGLTVSASQELNIHREIPTLFLANDLTGNSELCSLFLHADHRSGLNGKLLSRARFLFIAEFRHLFGDKLIAEMRGMSDEEGRSPFWESLGRHFFKMEFSQADYLTGVGNKAFIAELMPKFPLYTCFLSEEARGVIGRVHPNTEPALAMLKAEGFSYQGYVDIFDAGPAIEAETDKIRAIAESQNLVLAVGTPGDDAEPYLIHNRKREDCRITAAPARAAAGTLVVDPLTAKRLRLSAGASVRAVPLSAQKRG.

It belongs to the succinylarginine dihydrolase family. As to quaternary structure, heterotetramer of two alpha and two beta subunits.

It carries out the reaction succinyl-CoA + L-arginine = N(2)-succinyl-L-arginine + CoA + H(+). The protein operates within amino-acid degradation; L-arginine degradation via AST pathway; L-glutamate and succinate from L-arginine: step 1/5. This is Arginine N-succinyltransferase subunit beta (aruG) from Pseudomonas aeruginosa (strain ATCC 15692 / DSM 22644 / CIP 104116 / JCM 14847 / LMG 12228 / 1C / PRS 101 / PAO1).